The chain runs to 417 residues: C4-dicarboxylate transport protein (417 aa).

Transmembrane regions (helical) follow at residues 4 to 26 (IYVQ…PQIG), 41 to 60 (KLVI…ARMG), 72 to 94 (ALIY…GRLI), 137 to 159 (FIGA…TGFA), 180 to 202 (LFFG…AMGF), 217 to 239 (ALVA…GIAW), 285 to 307 (VVGL…YMTL), and 347 to 369 (FITL…AILV).

Belongs to the dicarboxylate/amino acid:cation symporter (DAACS) (TC 2.A.23) family.

Its subcellular location is the cell inner membrane. Its function is as follows. Responsible for the transport of dicarboxylates such as succinate, fumarate, and malate from the periplasm across the membrane. This is C4-dicarboxylate transport protein from Caulobacter vibrioides (strain ATCC 19089 / CIP 103742 / CB 15) (Caulobacter crescentus).